Here is a 93-residue protein sequence, read N- to C-terminus: Sec-independent protein translocase protein TatA (93 aa).

The chain crosses the membrane as a helical span at residues 1–21 (MGSLSPWHWAILAVVVILLFG). The interval 45 to 93 (EMQSENKTETSALGAQSESSAANPTPVQSQRVDPPAPSEQGHSEARPAS) is disordered. Over residues 53–75 (ETSALGAQSESSAANPTPVQSQR) the composition is skewed to polar residues.

It belongs to the TatA/E family. In terms of assembly, the Tat system comprises two distinct complexes: a TatABC complex, containing multiple copies of TatA, TatB and TatC subunits, and a separate TatA complex, containing only TatA subunits. Substrates initially bind to the TatABC complex, which probably triggers association of the separate TatA complex to form the active translocon.

It localises to the cell membrane. Part of the twin-arginine translocation (Tat) system that transports large folded proteins containing a characteristic twin-arginine motif in their signal peptide across membranes. TatA could form the protein-conducting channel of the Tat system. In Mycolicibacterium paratuberculosis (strain ATCC BAA-968 / K-10) (Mycobacterium paratuberculosis), this protein is Sec-independent protein translocase protein TatA.